The primary structure comprises 393 residues: Riboflavin biosynthesis protein RibBA (393 aa).

A DHBP synthase region spans residues 1-200 (MEFDEIKDAL…IESLVNYQKD (200 aa)). D-ribulose 5-phosphate is bound by residues 27–28 (RE), Asp-32, 139–143 (RTGHT), and Glu-163. Mg(2+) is bound at residue Glu-28. Mg(2+) is bound at residue His-142. Residues 201–393 (KDTSVELKAK…TKKIKMGHLI (193 aa)) form a GTP cyclohydrolase II region. 249–253 (RIHSA) provides a ligand contact to GTP. Residues Cys-254, Cys-265, and Cys-267 each contribute to the Zn(2+) site. Residues Gln-270, 291 to 293 (EGR), and Thr-313 contribute to the GTP site. Catalysis depends on Asp-325, which acts as the Proton acceptor; for GTP cyclohydrolase activity. Arg-327 serves as the catalytic Nucleophile; for GTP cyclohydrolase activity. 2 residues coordinate GTP: Ser-348 and Lys-353.

In the N-terminal section; belongs to the DHBP synthase family. This sequence in the C-terminal section; belongs to the GTP cyclohydrolase II family. It depends on Mg(2+) as a cofactor. The cofactor is Mn(2+). Zn(2+) serves as cofactor.

The catalysed reaction is D-ribulose 5-phosphate = (2S)-2-hydroxy-3-oxobutyl phosphate + formate + H(+). It catalyses the reaction GTP + 4 H2O = 2,5-diamino-6-hydroxy-4-(5-phosphoribosylamino)-pyrimidine + formate + 2 phosphate + 3 H(+). The protein operates within cofactor biosynthesis; riboflavin biosynthesis; 2-hydroxy-3-oxobutyl phosphate from D-ribulose 5-phosphate: step 1/1. It functions in the pathway cofactor biosynthesis; riboflavin biosynthesis; 5-amino-6-(D-ribitylamino)uracil from GTP: step 1/4. Functionally, catalyzes the conversion of D-ribulose 5-phosphate to formate and 3,4-dihydroxy-2-butanone 4-phosphate. In terms of biological role, catalyzes the conversion of GTP to 2,5-diamino-6-ribosylamino-4(3H)-pyrimidinone 5'-phosphate (DARP), formate and pyrophosphate. This chain is Riboflavin biosynthesis protein RibBA, found in Staphylococcus haemolyticus (strain JCSC1435).